A 621-amino-acid chain; its full sequence is Glutathione-regulated potassium-efflux system protein KefC (621 aa).

Helical transmembrane passes span 4-24 (HTLI…PIAV), 26-46 (LGLG…PWAL), 54-74 (AILH…GLEL), 90-110 (GALQ…LLGL), 114-134 (VAEL…MQAM), 149-169 (FAVL…IPLL), 178-198 (LMAF…VVVL), 218-237 (VFSA…LEEV), 238-257 (GLSM…SSEY), 270-290 (GLLL…GTLV), 294-314 (LRIV…LWLI), 326-346 (RWFA…FGAA), and 359-379 (ALTL…VLLT). The RCK N-terminal domain occupies 399–518 (QPRVIVAGFG…AGVEAPERET (120 aa)). Residues 598 to 621 (GWQGTEEGRHTGDIADEPENKPSA) form a disordered region.

It belongs to the monovalent cation:proton antiporter 2 (CPA2) transporter (TC 2.A.37) family. KefC subfamily. Homodimer. Interacts with the regulatory subunit KefF.

Its subcellular location is the cell inner membrane. In terms of biological role, pore-forming subunit of a potassium efflux system that confers protection against electrophiles. Catalyzes K(+)/H(+) antiport. The polypeptide is Glutathione-regulated potassium-efflux system protein KefC (Klebsiella pneumoniae subsp. pneumoniae (strain ATCC 700721 / MGH 78578)).